A 314-amino-acid chain; its full sequence is Formimidoylglutamase (314 aa).

His-127, Asp-153, His-155, Asp-157, Asp-245, and Asp-247 together coordinate Mn(2+).

Belongs to the arginase family. Requires Mn(2+) as cofactor.

It carries out the reaction N-formimidoyl-L-glutamate + H2O = formamide + L-glutamate. Its pathway is amino-acid degradation; L-histidine degradation into L-glutamate; L-glutamate from N-formimidoyl-L-glutamate (hydrolase route): step 1/1. Functionally, catalyzes the conversion of N-formimidoyl-L-glutamate to L-glutamate and formamide. The protein is Formimidoylglutamase of Aeromonas hydrophila subsp. hydrophila (strain ATCC 7966 / DSM 30187 / BCRC 13018 / CCUG 14551 / JCM 1027 / KCTC 2358 / NCIMB 9240 / NCTC 8049).